The following is a 72-amino-acid chain: Prokaryotic ubiquitin-like protein Pup (72 aa).

Gly residues predominate over residues 1–10; sequence MATRDSGGGQ. The interval 1–41 is disordered; that stretch reads MATRDSGGGQQHTNRHADEVEEVAAEGNDASDLKERHEKLS. A coiled-coil region spans residues 21 to 61; that stretch reads EEVAAEGNDASDLKERHEKLSEDVDSLLDEIDDVLEENAEE. An ARC ATPase binding region spans residues 28 to 66; it reads NDASDLKERHEKLSEDVDSLLDEIDDVLEENAEEFVKGY. Over residues 31–41 the composition is skewed to basic and acidic residues; sequence SDLKERHEKLS. An Isoglutamyl lysine isopeptide (Glu-Lys) (interchain with K-? in acceptor proteins) cross-link involves residue E72.

Belongs to the prokaryotic ubiquitin-like protein family. As to quaternary structure, strongly interacts with the proteasome-associated ATPase ARC through a hydrophobic interface; the interacting region of Pup lies in its C-terminal half. There is one Pup binding site per ARC hexamer ring.

It participates in protein degradation; proteasomal Pup-dependent pathway. In terms of biological role, protein modifier that is covalently attached to lysine residues of substrate proteins, thereby targeting them for proteasomal degradation. The tagging system is termed pupylation. The protein is Prokaryotic ubiquitin-like protein Pup of Frankia alni (strain DSM 45986 / CECT 9034 / ACN14a).